The chain runs to 589 residues: ATP-dependent lipid A-core flippase (589 aa).

Helical transmembrane passes span 29-49 (LLLV…TGFL), 70-90 (WLPV…YITD), 157-177 (VIGA…TILV), 261-281 (MIGA…ALAG), and 283-303 (LTAG…PGLK). Positions 32–314 (VAALIAALIE…LTNVQNMVQR (283 aa)) constitute an ABC transmembrane type-1 domain. An ABC transporter domain is found at 346 to 582 (IEFRDVTARY…GGLYSHLHGM (237 aa)). ATP is bound at residue 380-387 (GRSGSGKS).

Belongs to the ABC transporter superfamily. Lipid exporter (TC 3.A.1.106) family. Homodimer.

It is found in the cell inner membrane. The enzyme catalyses ATP + H2O + lipid A-core oligosaccharideSide 1 = ADP + phosphate + lipid A-core oligosaccharideSide 2.. Involved in lipopolysaccharide (LPS) biosynthesis. Translocates lipid A-core from the inner to the outer leaflet of the inner membrane. Transmembrane domains (TMD) form a pore in the inner membrane and the ATP-binding domain (NBD) is responsible for energy generation. The chain is ATP-dependent lipid A-core flippase from Xanthomonas axonopodis pv. citri (strain 306).